A 155-amino-acid chain; its full sequence is MPELFAYTDGACSGNPGPGGWGVLLRAIEGETVLKERELCGGEAETTNNRMELLAAINALETLERPSKITVVTDSAYVKNGVTGWIFGWKRNGWKTAGKKPVKNVELWQRLDLAQARHDVTWKWVKGHAGHPENERADELARAGMKPFKPKKARA.

The 146-residue stretch at 1–146 (MPELFAYTDG…ADELARAGMK (146 aa)) folds into the RNase H type-1 domain. The Mg(2+) site is built by Asp9, Glu52, Asp74, and Asp138.

The protein belongs to the RNase H family. Monomer. The cofactor is Mg(2+).

The protein localises to the cytoplasm. The catalysed reaction is Endonucleolytic cleavage to 5'-phosphomonoester.. Endonuclease that specifically degrades the RNA of RNA-DNA hybrids. The protein is Ribonuclease H of Ruegeria pomeroyi (strain ATCC 700808 / DSM 15171 / DSS-3) (Silicibacter pomeroyi).